We begin with the raw amino-acid sequence, 394 residues long: Chaperone protein DnaJ (394 aa).

The 71-residue stretch at 5 to 75 (DYYEVLGVDK…EKKQQYDQFG (71 aa)) folds into the J domain. A CR-type zinc finger spans residues 150–231 (GVEKTIKYKR…CRGTGTAKET (82 aa)). Residues cysteine 163, cysteine 166, cysteine 179, cysteine 182, cysteine 205, cysteine 208, cysteine 219, and cysteine 222 each coordinate Zn(2+). CXXCXGXG motif repeat units lie at residues 163–170 (CEHCHGTG), 179–186 (CPTCNGQG), 205–212 (CPDCHGTG), and 219–226 (CKHCRGTG).

This sequence belongs to the DnaJ family. Homodimer. It depends on Zn(2+) as a cofactor.

Its subcellular location is the cytoplasm. Functionally, participates actively in the response to hyperosmotic and heat shock by preventing the aggregation of stress-denatured proteins and by disaggregating proteins, also in an autonomous, DnaK-independent fashion. Unfolded proteins bind initially to DnaJ; upon interaction with the DnaJ-bound protein, DnaK hydrolyzes its bound ATP, resulting in the formation of a stable complex. GrpE releases ADP from DnaK; ATP binding to DnaK triggers the release of the substrate protein, thus completing the reaction cycle. Several rounds of ATP-dependent interactions between DnaJ, DnaK and GrpE are required for fully efficient folding. Also involved, together with DnaK and GrpE, in the DNA replication of plasmids through activation of initiation proteins. This chain is Chaperone protein DnaJ, found in Fusobacterium nucleatum subsp. polymorphum (Fusobacterium polymorphum).